The primary structure comprises 508 residues: Photosystem II CP47 reaction center protein (508 aa).

Transmembrane regions (helical) follow at residues Ser-21–Ser-36, Ile-101–Trp-115, Gly-140–Phe-156, Ile-203–Ser-218, Val-237–Val-252, and Ser-457–Arg-472.

It belongs to the PsbB/PsbC family. PsbB subfamily. In terms of assembly, PSII is composed of 1 copy each of membrane proteins PsbA, PsbB, PsbC, PsbD, PsbE, PsbF, PsbH, PsbI, PsbJ, PsbK, PsbL, PsbM, PsbT, PsbX, PsbY, PsbZ, Psb30/Ycf12, at least 3 peripheral proteins of the oxygen-evolving complex and a large number of cofactors. It forms dimeric complexes. Binds multiple chlorophylls. PSII binds additional chlorophylls, carotenoids and specific lipids. is required as a cofactor.

It localises to the plastid. It is found in the chloroplast thylakoid membrane. Functionally, one of the components of the core complex of photosystem II (PSII). It binds chlorophyll and helps catalyze the primary light-induced photochemical processes of PSII. PSII is a light-driven water:plastoquinone oxidoreductase, using light energy to abstract electrons from H(2)O, generating O(2) and a proton gradient subsequently used for ATP formation. The protein is Photosystem II CP47 reaction center protein of Illicium oligandrum (Star anise).